The sequence spans 334 residues: Probable aminoacyl tRNA synthase complex-interacting multifunctional protein 2 (334 aa).

The GST C-terminal domain maps to 280–327 (LDKRLQKQQYFGGSQMSVADVGVYSSLIRMPAVTEKDLTPALVAWRKR).

In terms of assembly, component of the aminoacyl-tRNA synthase complex which is comprised of a bifunctional glutamyl-prolyl-tRNA synthase, the monospecific isoleucyl, leucyl, glutaminyl, methionyl, lysyl, arginyl and aspartyl-tRNA synthases, and three auxiliary proteins.

Its subcellular location is the cytoplasm. The protein resides in the cytosol. The protein localises to the nucleus. Its function is as follows. Required for assembly and stability of the aminoacyl-tRNA synthase complex. This is Probable aminoacyl tRNA synthase complex-interacting multifunctional protein 2 from Drosophila melanogaster (Fruit fly).